The primary structure comprises 185 residues: Transcription termination/antitermination protein NusG (185 aa).

Residues 134 to 162 form the KOW domain; the sequence is PGQMVRVIDGPFNDFDGLVEEVNYEKNRL.

This sequence belongs to the NusG family.

Its function is as follows. Participates in transcription elongation, termination and antitermination. The polypeptide is Transcription termination/antitermination protein NusG (Xylella fastidiosa (strain Temecula1 / ATCC 700964)).